Reading from the N-terminus, the 371-residue chain is AA9 family lytic polysaccharide monooxygenase B (371 aa).

Residues 1–25 (MSIAKIAGVVLGSAALVAGHGYVSG) form the signal peptide. Cu(2+)-binding residues include H20 and H104. Disulfide bonds link C74–C194 and C115–C119. A glycan (N-linked (GlcNAc...) asparagine) is linked at N154. H180 and Q189 together coordinate O2. Residue Y191 coordinates Cu(2+). The disordered stretch occupies residues 304–332 (HVQATSSSAAASTPTASSGASSGSGSSSS). The span at 307–332 (ATSSSAAASTPTASSGASSGSGSSSS) shows a compositional bias: low complexity.

It belongs to the polysaccharide monooxygenase AA9 family. It depends on Cu(2+) as a cofactor.

It is found in the secreted. The enzyme catalyses [(1-&gt;4)-beta-D-glucosyl]n+m + reduced acceptor + O2 = 4-dehydro-beta-D-glucosyl-[(1-&gt;4)-beta-D-glucosyl]n-1 + [(1-&gt;4)-beta-D-glucosyl]m + acceptor + H2O.. Lytic polysaccharide monooxygenase (LPMO) that depolymerizes crystalline and amorphous polysaccharides via the oxidation of scissile alpha- or beta-(1-4)-glycosidic bonds, yielding C1 and C4 oxidation products. Catalysis by LPMOs requires the reduction of the active-site copper from Cu(II) to Cu(I) by a reducing agent and H(2)O(2) or O(2) as a cosubstrate. In addition to cellulose, also cleaves the beta-(1!4)-glucan backbone of tamarind xyloglucan, irrespective of substitutions which contrasts with AA9A xyloglucan cleavage activity. The protein is AA9 family lytic polysaccharide monooxygenase B of Aspergillus tamarii.